The following is a 118-amino-acid chain: Urease subunit beta (118 aa).

The protein belongs to the urease beta subunit family. As to quaternary structure, heterotrimer of UreA (gamma), UreB (beta) and UreC (alpha) subunits. Three heterotrimers associate to form the active enzyme.

The protein localises to the cytoplasm. It carries out the reaction urea + 2 H2O + H(+) = hydrogencarbonate + 2 NH4(+). The protein operates within nitrogen metabolism; urea degradation; CO(2) and NH(3) from urea (urease route): step 1/1. This Aliivibrio fischeri (strain MJ11) (Vibrio fischeri) protein is Urease subunit beta.